Here is a 267-residue protein sequence, read N- to C-terminus: 4-hydroxy-tetrahydrodipicolinate reductase (267 aa).

11–16 contacts NAD(+); that stretch reads GAAGRM. Arginine 39 is a binding site for NADP(+). NAD(+)-binding positions include 100–102 and 126–129; these read GTT and APNF. Histidine 156 (proton donor/acceptor) is an active-site residue. Residue histidine 157 participates in (S)-2,3,4,5-tetrahydrodipicolinate binding. Lysine 160 (proton donor) is an active-site residue. 166–167 contributes to the (S)-2,3,4,5-tetrahydrodipicolinate binding site; that stretch reads GT.

Belongs to the DapB family.

The protein localises to the cytoplasm. The enzyme catalyses (S)-2,3,4,5-tetrahydrodipicolinate + NAD(+) + H2O = (2S,4S)-4-hydroxy-2,3,4,5-tetrahydrodipicolinate + NADH + H(+). It carries out the reaction (S)-2,3,4,5-tetrahydrodipicolinate + NADP(+) + H2O = (2S,4S)-4-hydroxy-2,3,4,5-tetrahydrodipicolinate + NADPH + H(+). The protein operates within amino-acid biosynthesis; L-lysine biosynthesis via DAP pathway; (S)-tetrahydrodipicolinate from L-aspartate: step 4/4. Its function is as follows. Catalyzes the conversion of 4-hydroxy-tetrahydrodipicolinate (HTPA) to tetrahydrodipicolinate. The chain is 4-hydroxy-tetrahydrodipicolinate reductase from Moorella thermoacetica (strain ATCC 39073 / JCM 9320).